We begin with the raw amino-acid sequence, 320 residues long: tRNA U34 carboxymethyltransferase (320 aa).

Carboxy-S-adenosyl-L-methionine-binding positions include K87, W101, K106, G126, 148–150, 176–177, M192, Y196, and R311; these read EPS and VE.

This sequence belongs to the class I-like SAM-binding methyltransferase superfamily. CmoB family. In terms of assembly, homotetramer.

The enzyme catalyses carboxy-S-adenosyl-L-methionine + 5-hydroxyuridine(34) in tRNA = 5-carboxymethoxyuridine(34) in tRNA + S-adenosyl-L-homocysteine + H(+). Functionally, catalyzes carboxymethyl transfer from carboxy-S-adenosyl-L-methionine (Cx-SAM) to 5-hydroxyuridine (ho5U) to form 5-carboxymethoxyuridine (cmo5U) at position 34 in tRNAs. The sequence is that of tRNA U34 carboxymethyltransferase from Desulfotalea psychrophila (strain LSv54 / DSM 12343).